The primary structure comprises 435 residues: Transcription activator AKTR-2 (435 aa).

Positions 16 to 43 form a DNA-binding region, zn(2)-C6 fungal-type; sequence CDFCTQSKLRCNKNKPSCRRCTIQQQVC. The interval 49-103 is disordered; the sequence is RRTGRPPKHPRRADDSQETSGQHGHQDPMTSAPADSCEQQSSHLDLEGDDTDFTL. A compositionally biased stretch (basic residues) spans 50-59; it reads RTGRPPKHPR.

It is found in the nucleus. In terms of biological role, transcription factor that regulates the expression of the gene clusters that mediate the biosynthesis of the host-selective toxins (HSTs) AK-toxins responsible for Japanese pear black spot disease by the Japanese pear pathotype. AK-toxins are esters of 9,10-epoxy 8-hydroxy 9-methyldecatrienoic acid (EDA). On cellular level, AK-toxins affect plasma membrane of susceptible cells and cause a sudden increase in loss of K(+) after a few minutes of toxin treatment. The sequence is that of Transcription activator AKTR-2 from Alternaria alternata (Alternaria rot fungus).